We begin with the raw amino-acid sequence, 286 residues long: Pantothenate synthetase (286 aa).

32–39 contributes to the ATP binding site; it reads MGALHEGH. The active-site Proton donor is the His39. Gln63 contacts (R)-pantoate. Gln63 is a beta-alanine binding site. 149–152 contributes to the ATP binding site; the sequence is GEKD. Residue Gln155 participates in (R)-pantoate binding. Residues Leu178 and 186 to 189 contribute to the ATP site; that span reads SSSR.

It belongs to the pantothenate synthetase family. In terms of assembly, homodimer.

Its subcellular location is the cytoplasm. The catalysed reaction is (R)-pantoate + beta-alanine + ATP = (R)-pantothenate + AMP + diphosphate + H(+). The protein operates within cofactor biosynthesis; (R)-pantothenate biosynthesis; (R)-pantothenate from (R)-pantoate and beta-alanine: step 1/1. Functionally, catalyzes the condensation of pantoate with beta-alanine in an ATP-dependent reaction via a pantoyl-adenylate intermediate. This is Pantothenate synthetase from Bartonella quintana (strain Toulouse) (Rochalimaea quintana).